We begin with the raw amino-acid sequence, 418 residues long: Serine hydroxymethyltransferase (418 aa).

Residues L121 and 125–127 (GHL) contribute to the (6S)-5,6,7,8-tetrahydrofolate site. K230 is modified (N6-(pyridoxal phosphate)lysine). 356–358 (SPF) provides a ligand contact to (6S)-5,6,7,8-tetrahydrofolate.

This sequence belongs to the SHMT family. Homodimer. Pyridoxal 5'-phosphate is required as a cofactor.

The protein localises to the cytoplasm. It catalyses the reaction (6R)-5,10-methylene-5,6,7,8-tetrahydrofolate + glycine + H2O = (6S)-5,6,7,8-tetrahydrofolate + L-serine. Its pathway is one-carbon metabolism; tetrahydrofolate interconversion. It functions in the pathway amino-acid biosynthesis; glycine biosynthesis; glycine from L-serine: step 1/1. Catalyzes the reversible interconversion of serine and glycine with tetrahydrofolate (THF) serving as the one-carbon carrier. This reaction serves as the major source of one-carbon groups required for the biosynthesis of purines, thymidylate, methionine, and other important biomolecules. Also exhibits THF-independent aldolase activity toward beta-hydroxyamino acids, producing glycine and aldehydes, via a retro-aldol mechanism. The protein is Serine hydroxymethyltransferase of Pseudoalteromonas translucida (strain TAC 125).